Consider the following 368-residue polypeptide: Meiotic driver wtf23 (368 aa).

The segment at 1-98 (MKNKYYPLRS…SSGTADNSST (98 aa)) is disordered. Residues 11–29 (SMDELSAKNDNEIDLEKGP) show a composition bias toward basic and acidic residues. Composition is skewed to polar residues over residues 57–72 (GANN…STTP) and 89–98 (SSGTADNSST). A run of 7 helical transmembrane segments spans residues 105–124 (FLSF…YLTY), 139–158 (YFGV…WYFY), 170–192 (IFLA…VISI), 202–221 (MIII…GCVK), 234–256 (STCT…FWTF), 266–283 (VFLL…TMFL), and 328–350 (GIAF…FRGG).

It belongs to the WTF family. As to quaternary structure, homomer. Forms protein aggregates. The two isoforms can interact with each other and with themselves. High sequence similarity is required for their interaction.

It is found in the spore membrane. The protein resides in the vacuole membrane. The protein localises to the ascus epiplasm. Its subcellular location is the cytoplasm. It localises to the endoplasmic reticulum membrane. Promotes unequal transmission of alleles from the parental zygote to progeny spores by acting as poison/antidote system where the poison and antidote proteins are produced from the same locus; the poison component is trans-acting and targets all spores within an ascus whereas the antidote component is spore-specific, leading to poisoning of all progeny that do not inherit the allele. Its function is as follows. Localizes isoform 2 to the vacuole thereby facilitating its degradation. In terms of biological role, forms toxic aggregates that disrupt spore maturation. This is Meiotic driver wtf23 from Schizosaccharomyces pombe (strain 972 / ATCC 24843) (Fission yeast).